The sequence spans 67 residues: ATP synthase F(0) complex subunit 8 (67 aa).

The helical transmembrane segment at 8 to 24 (TWFITIISSMITLFILF) threads the bilayer. Residue K54 is modified to N6-acetyllysine; alternate. K54 is modified (N6-succinyllysine; alternate). K57 is subject to N6-acetyllysine.

It belongs to the ATPase protein 8 family. Component of the ATP synthase complex composed at least of ATP5F1A/subunit alpha, ATP5F1B/subunit beta, ATP5MC1/subunit c (homooctomer), MT-ATP6/subunit a, MT-ATP8/subunit 8, ATP5ME/subunit e, ATP5MF/subunit f, ATP5MG/subunit g, ATP5MK/subunit k, ATP5MJ/subunit j, ATP5F1C/subunit gamma, ATP5F1D/subunit delta, ATP5F1E/subunit epsilon, ATP5PF/subunit F6, ATP5PB/subunit b, ATP5PD/subunit d, ATP5PO/subunit OSCP. ATP synthase complex consists of a soluble F(1) head domain (subunits alpha(3) and beta(3)) - the catalytic core - and a membrane F(0) domain - the membrane proton channel (subunits c, a, 8, e, f, g, k and j). These two domains are linked by a central stalk (subunits gamma, delta, and epsilon) rotating inside the F1 region and a stationary peripheral stalk (subunits F6, b, d, and OSCP). Interacts with PRICKLE3.

The protein localises to the mitochondrion membrane. Functionally, subunit 8, of the mitochondrial membrane ATP synthase complex (F(1)F(0) ATP synthase or Complex V) that produces ATP from ADP in the presence of a proton gradient across the membrane which is generated by electron transport complexes of the respiratory chain. ATP synthase complex consist of a soluble F(1) head domain - the catalytic core - and a membrane F(1) domain - the membrane proton channel. These two domains are linked by a central stalk rotating inside the F(1) region and a stationary peripheral stalk. During catalysis, ATP synthesis in the catalytic domain of F(1) is coupled via a rotary mechanism of the central stalk subunits to proton translocation. In vivo, can only synthesize ATP although its ATP hydrolase activity can be activated artificially in vitro. Part of the complex F(0) domain. The chain is ATP synthase F(0) complex subunit 8 from Mus musculus (Mouse).